The following is a 194-amino-acid chain: Calcium channel flower (194 aa).

3 helical membrane-spanning segments follow: residues 35 to 55 (LGIVAAFFAILFGLWNVFSII), 66 to 88 (IIQMVAGFVVMLLEALCCFVCFE), and 107 to 127 (GLYIAMAIPPIILCFGLASLF).

This sequence belongs to the calcium channel flower family. Homomultimer. Associates with the dally/ magu complex.

It localises to the cell membrane. The protein resides in the cytoplasmic vesicle. Its subcellular location is the secretory vesicle. The protein localises to the synaptic vesicle membrane. It is found in the presynaptic cell membrane. It localises to the endosome. Channel activity is inhibited by La(3+), which reduces Ca(2+) influx and thus inhibits it's function in promoting activity-dependent bulk endocytosis (ADBE) in response to high stimuli. Functionally, transmembrane protein which mediates synaptic endocytosis, fitness-based cell culling, neuronal culling, morphogen gradient scaling, and calcium transport. Regulates synaptic endocytosis and hence couples exo- with endocytosis. Controls two major modes of synaptic vesicle (SV) endocytosis in the synaptic boutons of neuromuscular junctions (NMJs); Ca(2+) channel-independent Clathrin-mediated endocytosis (CME) in response to mild stimulation, and Ca(2+) channel-dependent activity-dependent bulk endocytosis (ADBE) in response to strong stimulation. Functions in ADBE and subsequent SV reformation from bulk endosomes by initiating Ca(2+) channel-dependent phosphatidylinositol 4,5-bisphosphate (PtdIns(4,5)P2) compartmentalization in synaptic boutons. There it acts at the periactive zone to provide the low Ca(2+) levels required to initiate Calcineurin activation and upregulate PtdIns(4,5)P2. Conversely PtdIns(4,5)P2 enhances fwe Ca(2+) channel-activity, establishing a positive feedback loop that induces PtdIns(4,5)P2 microdomain at the periactive zone. These microdomains trigger bulk membrane invagination (i.e. ADBE) by triggering actin polymerization while also promoting localization of fwe to bulk endosomes, thereby removing the ADBE trigger to reduce endocytosis and prevent excess membrane uptake. PtdIns(4,5)P2 then promotes SV reformation from the bulk endosomes, to coordinate ADBE and subsequent SV reformation. Different combinations of the flower isoforms at the cell membrane are also required for the identification and elimination of suboptimal or supernumerary cells during development, regeneration, and adulthood. Required for the recognition and elimination of unfit cells in the developing wing during cell competition. In the developing pupal retina, mediates the elimination of unwanted postmitotic neurons, including supernumerary photoreceptor neurons that form at the periphery of the retina and are contained within incomplete ommatidia units. Also required for efficient elimination and replacement of old neurons by newly generated neurons during regeneration in the adult brain following mechanical injury. Downstream of the flower fitness fingerprints, cells identified as unwanted or unfit are eliminated via apoptosis through the expression of ahuizotl (azot). However, the cells marked for elimination by the flower isoforms only undergo apoptosis if additional thresholds are met; (1) their neighboring fit/healthy cells express different levels of the fwe isoforms, and (2) the levels of the protective signal SPARC expressed by the loser or unwanted cells are unable to inhibit caspase activation. These additional thresholds for flower-mediated apoptosis, allows useful cells to recover from transient and limited stress before they are unnecessarily eliminated. Functions with dally and magu in a mechanism of scaling, which utilises apoptosis to ensure that the dpp morphogen gradient, which mediates organ growth, remains proportional to the size of the growing wing. In this mechanism, fwe represses dally- and Magu-dependent activity in expanding the gradient, and dally/Magu inhibits fwe-dependent apoptosis to keep cell death rate low. When the levels of these different proteins are optimally regulated the gradient correctly scales with organ growth but when this fails, fwe-mediated apoptosis is activated to trim the developing tissue to match the correct size of the gradient. The chain is Calcium channel flower from Drosophila sechellia (Fruit fly).